The primary structure comprises 97 residues: Serine protease inhibitor Kazal-type 14 (97 aa).

Positions 1–21 (MAKSFPVFSLLSFILIHLVLS) are cleaved as a signal peptide. Residues 34-97 (GIIKVKCPYE…RIRFYHDGKC (64 aa)) enclose the Kazal-like domain. Disulfide bonds link Cys-40–Cys-79, Cys-57–Cys-76, and Cys-65–Cys-97. Residue Asn-51 is glycosylated (N-linked (GlcNAc...) asparagine).

The protein resides in the secreted. Its function is as follows. May be a serine protease inhibitor. This is Serine protease inhibitor Kazal-type 14 (SPINK14) from Homo sapiens (Human).